A 425-amino-acid chain; its full sequence is Serine--tRNA ligase (425 aa).

229 to 231 (TSE) contacts L-serine. ATP-binding positions include 259–261 (RKE) and V275. Residue E282 coordinates L-serine. Residue 349-352 (EITS) participates in ATP binding. T384 is an L-serine binding site.

Belongs to the class-II aminoacyl-tRNA synthetase family. Type-1 seryl-tRNA synthetase subfamily. In terms of assembly, homodimer. The tRNA molecule binds across the dimer.

It is found in the cytoplasm. The catalysed reaction is tRNA(Ser) + L-serine + ATP = L-seryl-tRNA(Ser) + AMP + diphosphate + H(+). It carries out the reaction tRNA(Sec) + L-serine + ATP = L-seryl-tRNA(Sec) + AMP + diphosphate + H(+). The protein operates within aminoacyl-tRNA biosynthesis; selenocysteinyl-tRNA(Sec) biosynthesis; L-seryl-tRNA(Sec) from L-serine and tRNA(Sec): step 1/1. Its function is as follows. Catalyzes the attachment of serine to tRNA(Ser). Is also able to aminoacylate tRNA(Sec) with serine, to form the misacylated tRNA L-seryl-tRNA(Sec), which will be further converted into selenocysteinyl-tRNA(Sec). This chain is Serine--tRNA ligase, found in Borreliella afzelii (strain PKo) (Borrelia afzelii).